The sequence spans 366 residues: Methylthioribose-1-phosphate isomerase (366 aa).

Substrate contacts are provided by residues 53–55 (RGA), R90, and Q203. Residue D244 is the Proton donor of the active site. 254–255 (NK) contributes to the substrate binding site.

It belongs to the eIF-2B alpha/beta/delta subunits family. MtnA subfamily.

It carries out the reaction 5-(methylsulfanyl)-alpha-D-ribose 1-phosphate = 5-(methylsulfanyl)-D-ribulose 1-phosphate. It functions in the pathway amino-acid biosynthesis; L-methionine biosynthesis via salvage pathway; L-methionine from S-methyl-5-thio-alpha-D-ribose 1-phosphate: step 1/6. In terms of biological role, catalyzes the interconversion of methylthioribose-1-phosphate (MTR-1-P) into methylthioribulose-1-phosphate (MTRu-1-P). The protein is Methylthioribose-1-phosphate isomerase of Methylocella silvestris (strain DSM 15510 / CIP 108128 / LMG 27833 / NCIMB 13906 / BL2).